Reading from the N-terminus, the 303-residue chain is MNPALPRHIAVLKGGPSEEREISLRTAKAVEDALSSLGYEISSIDVTTEKFEIPRDAEICFLCIHGSFGEDGQIQRLLMRRGIPFTGSDASSSEKAFDKAWSKTLFIKGGIPTPPFCVVGDGKKIPFDPPYVIKPSRQGSSIGIEFVYDIKELDQAIKKSTQYDHVVLAEALITGKELTVGILDGKALPVVEIKPKEGFYDYHHKYTKGASTYFCPAPLTVDQTSAVQKTALDAFNVLGCSVYGRVDIILSDNGIPWVLEINTIPGMTETSLFPMAAKASGMNFAQLCEKILEISYLRWKAHG.

The region spanning 103 to 293 (KTLFIKGGIP…FAQLCEKILE (191 aa)) is the ATP-grasp domain. Residue 130–179 (PYVIKPSRQGSSIGIEFVYDIKELDQAIKKSTQYDHVVLAEALITGKELT) participates in ATP binding. Residues Asp247, Glu260, and Asn262 each contribute to the Mg(2+) site.

It belongs to the D-alanine--D-alanine ligase family. Mg(2+) serves as cofactor. Mn(2+) is required as a cofactor.

It is found in the cytoplasm. The catalysed reaction is 2 D-alanine + ATP = D-alanyl-D-alanine + ADP + phosphate + H(+). It functions in the pathway cell wall biogenesis; peptidoglycan biosynthesis. Its function is as follows. Cell wall formation. The protein is D-alanine--D-alanine ligase of Methylacidiphilum infernorum (isolate V4) (Methylokorus infernorum (strain V4)).